The primary structure comprises 1383 residues: PAS domain-containing serine/threonine-protein kinase (1383 aa).

Met-1 is modified (N-acetylmethionine). At Ser-19 the chain carries Phosphoserine. Thr-31 bears the Phosphothreonine mark. PAS domains follow at residues 117–188 (SGSL…VEAD) and 333–400 (YQAS…SVQL). Ser-1000 is subject to Phosphoserine. The 253-residue stretch at 1059 to 1311 (YNTISPLGSG…LEKLIRDPWV (253 aa)) folds into the Protein kinase domain. ATP contacts are provided by residues 1065–1073 (LGSGAFGFV), Lys-1088, and 1142–1149 (EKHGSGMD). Residue Asp-1188 is the Proton acceptor of the active site. Asp-1206 is an ATP binding site. Thr-1221 and Thr-1225 each carry phosphothreonine; by autocatalysis. A disordered region spans residues 1344 to 1383 (GSRSPSEMAQREGLCGPPAPRETRGDQHCLHLKDPSLPVS). Over residues 1364 to 1377 (RETRGDQHCLHLKD) the composition is skewed to basic and acidic residues.

This sequence belongs to the protein kinase superfamily. CAMK Ser/Thr protein kinase family. Autophosphorylated on Thr-1221 and Thr-1225. Autophosphorylation is activated by phospholipids. Ubiquitously expressed. Strongly up-regulated in postmeiotic germ cells during spermatogenesis.

It is found in the cytoplasm. It localises to the nucleus. It carries out the reaction L-seryl-[protein] + ATP = O-phospho-L-seryl-[protein] + ADP + H(+). It catalyses the reaction L-threonyl-[protein] + ATP = O-phospho-L-threonyl-[protein] + ADP + H(+). With respect to regulation, protein kinase activity is inhibited by the first PAS domain: binding of an unidentified ligand desinhibits the protein kinase activity. May be activated by autophosphorylation on Thr-1221 and Thr-1225. Autophosphorylation is enhanced upon phosphatidylinositol monophosphate (phosphatidylinositol 4-phosphate) binding and inhibited upon phosphatidylinositol bi- and tri-phosphate binding. In contrast, phosphorylation of target proteins is inhibited upon all phosphatidylinositol-binding (phosphatidylinositol mono- bi- and tri-phosphate). Serine/threonine-protein kinase involved in energy homeostasis and protein translation. Phosphorylates EEF1A1, GYS1, PDX1 and RPS6. Probably plays a role under changing environmental conditions (oxygen, glucose, nutrition), rather than under standard conditions. Acts as a sensor involved in energy homeostasis: regulates glycogen synthase synthesis by mediating phosphorylation of GYS1, leading to GYS1 inactivation. May be involved in glucose-stimulated insulin production in pancreas and regulation of glucagon secretion by glucose in alpha cells; however such data require additional evidences. May play a role in regulation of protein translation by phosphorylating EEF1A1, leading to increase translation efficiency. May also participate in respiratory regulation. This chain is PAS domain-containing serine/threonine-protein kinase (Pask), found in Mus musculus (Mouse).